The sequence spans 1037 residues: Importin-8 (1037 aa).

One can recognise an Importin N-terminal domain in the interval A22–R102. The segment covering D886–M895 has biased composition (basic and acidic residues). Residues D886–E934 form a disordered region. Residues E896–T908 are compositionally biased toward acidic residues. S902 and S903 each carry phosphoserine. Positions N909 to G920 are enriched in polar residues. A compositionally biased stretch (acidic residues) spans E923–E934.

This sequence belongs to the importin beta family. In terms of assembly, forms a heterodimer with KPNB1. Interacts with SRP19. Interacts with RPL23A. Binds directly to nuclear pore complexes. Interacts with LRPPRC; the interaction occurs when LRPPRC is in its RNA-free form and promotes import of LRPPRC to the nucleus to allow for EIF4E-mediated export of mRNAS from the nucleus to the cytoplasm.

It localises to the cytoplasm. The protein resides in the nucleus. Functionally, involved in nuclear protein import, either by acting as autonomous nuclear transport receptor or as an adapter-like protein in association with the importin-beta subunit KPNB1. Acting autonomously, may serve as receptor for nuclear localization signals (NLS) and promote translocation of import substrates through the nuclear pore complex (NPC) by an energy requiring, Ran-dependent mechanism. At the nucleoplasmic side of the NPC, Ran binds to importin, the importin/substrate complex dissociates and importin is re-exported from the nucleus to the cytoplasm where GTP hydrolysis releases Ran. The directionality of nuclear import is thought to be conferred by an asymmetric distribution of the GTP- and GDP-bound forms of Ran between the cytoplasm and nucleus. In vitro mediates the nuclear import of the signal recognition particle protein SRP19. May also be involved in cytoplasm-to-nucleus shuttling of a broad spectrum of other cargos, including Argonaute-microRNAs complexes, the JUN protein, RELA/NF-kappa-B p65 subunit, the translation initiation factor EIF4E and a set of receptor-activated mothers against decapentaplegic homolog (SMAD) transcription factors that play a critical role downstream of the large family of transforming growth factor beta and bone morphogenetic protein (BMP) cytokines. This chain is Importin-8 (IPO8), found in Homo sapiens (Human).